Consider the following 601-residue polypeptide: NADH-ubiquinone oxidoreductase chain 5 (601 aa).

17 consecutive transmembrane segments (helical) span residues 5-25 (ITSL…TLSF), 37-54 (YMRN…IYID), 83-105 (YCLT…SLWY), 112-129 (TLFF…LFFL), 134-156 (LLQL…NWWH), 169-189 (IIYN…SALF), 209-231 (WLPL…LHPW), 240-260 (TPVS…FLLI), 271-291 (MIIS…ALCA), 300-320 (IIAF…GINQ), 323-343 (LAFL…LCSA), 363-383 (LILP…MGMP), 400-420 (MSYV…LTSI), 451-471 (PLIR…TFFL), 478-498 (FSIP…VSSL), 508-528 (FSHM…AIFH), and 581-601 (NYIT…ALYF).

It belongs to the complex I subunit 5 family.

It is found in the mitochondrion inner membrane. The catalysed reaction is a ubiquinone + NADH + 5 H(+)(in) = a ubiquinol + NAD(+) + 4 H(+)(out). Functionally, core subunit of the mitochondrial membrane respiratory chain NADH dehydrogenase (Complex I) that is believed to belong to the minimal assembly required for catalysis. Complex I functions in the transfer of electrons from NADH to the respiratory chain. The immediate electron acceptor for the enzyme is believed to be ubiquinone. In Myxine glutinosa (Atlantic hagfish), this protein is NADH-ubiquinone oxidoreductase chain 5 (MT-ND5).